A 98-amino-acid polypeptide reads, in one-letter code: Small ribosomal subunit protein bS16 (98 aa).

The protein belongs to the bacterial ribosomal protein bS16 family.

This chain is Small ribosomal subunit protein bS16, found in Pseudothermotoga lettingae (strain ATCC BAA-301 / DSM 14385 / NBRC 107922 / TMO) (Thermotoga lettingae).